A 419-amino-acid polypeptide reads, in one-letter code: Transcription termination factor Rho (419 aa).

Positions 48 to 123 constitute a Rho RNA-BD domain; that stretch reads DIFGDGVLEI…LKVNEVNYDK (76 aa). RNA-binding regions lie at residues 61–66, 78–80, and 108–110; these read GFGFLR, DIY, and ERY. ATP contacts are provided by residues 169–174, 181–186, and Arg212; these read GRGQRG and KAGKTM. An RNA-binding 2 region spans residues 284-288; it reads VLTGG.

The protein belongs to the Rho family. In terms of assembly, homohexamer. The homohexamer assembles into an open ring structure.

Facilitates transcription termination by a mechanism that involves Rho binding to the nascent RNA, activation of Rho's RNA-dependent ATPase activity, and release of the mRNA from the DNA template. The chain is Transcription termination factor Rho from Salmonella typhi.